We begin with the raw amino-acid sequence, 377 residues long: Probable G-protein coupled receptor 27 (377 aa).

Residues methionine 1–alanine 24 lie on the Extracellular side of the membrane. A glycan (N-linked (GlcNAc...) asparagine) is linked at asparagine 3. A helical transmembrane segment spans residues threonine 25 to valine 45. Topologically, residues arginine 46–tyrosine 56 are cytoplasmic. A helical transmembrane segment spans residues leucine 57–methionine 77. Residues leucine 78–leucine 98 lie on the Extracellular side of the membrane. A disulfide bond links cysteine 96 and cysteine 173. Residues leucine 99–valine 119 traverse the membrane as a helical segment. The Cytoplasmic segment spans residues threonine 120–cysteine 140. A helical membrane pass occupies residues alanine 141–leucine 161. Topologically, residues aspartate 162 to proline 183 are extracellular. A helical transmembrane segment spans residues glycine 184–leucine 204. Residues arginine 205 to methionine 287 lie on the Cytoplasmic side of the membrane. Residues phenylalanine 288–leucine 308 form a helical membrane-spanning segment. The Extracellular portion of the chain corresponds to arginine 309–leucine 322. The chain crosses the membrane as a helical span at residues threonine 323–phenylalanine 343. The Cytoplasmic segment spans residues asparagine 344 to leucine 377.

It belongs to the G-protein coupled receptor 1 family. Expressed as a 3.0 kb transcript, in whole brain, hippocampus, striatum, frontal cortex, thalamus, pons and hypothalamus. A lower molecular weight transcript was detected in all regions examined, except the hypothalamus.

It localises to the cell membrane. Orphan receptor. Possible candidate for amine-like G-protein coupled receptor. This is Probable G-protein coupled receptor 27 (Gpr27) from Rattus norvegicus (Rat).